The following is a 603-amino-acid chain: ADP-ribosylation factor-binding protein GGA2 (603 aa).

A disordered region spans residues 1–22 (MAATAVAAGTGSPAGTESAEGG). Residues 13 to 22 (PAGTESAEGG) are compositionally biased toward low complexity. Residues 36-166 (ATDPSMAEQD…MLKKQGIIKQ (131 aa)) form the VHS domain. Positions 190–317 (DEEKSKLLTR…GVRLYKQVVE (128 aa)) constitute a GAT domain. Positions 318 to 473 (GRVSAGNAVP…VFVPLESVKP (156 aa)) are unstructured hinge. In terms of domain architecture, GAE spans 474–595 (SSLPPIVVYD…SEVGEVKDFP (122 aa)).

It belongs to the GGA protein family. As to quaternary structure, monomer. Interacts with NECAP1, TSG101, UBC and AFTPH/aftiphilin. Interacts with CNST. Interacts with GGA1 and GGA3. Binds to clathrin and activated ARFs, such as ARF1, ARF5 and ARF6. Binds RABEP1 and RABGEF1. Interacts with the type-I membrane proteins LRP3, M6PR/CD-MPR, IGF2R/CI-MPR and BACE1. Interacts (via N-terminal VHS domain) with SORL1/sorLA and SORT1 (via C-terminal cytosolic domain). Binds the accessory proteins CCDC91, P200, SYNRG, EPN4 and NECAP2. Interacts with ADRA2B. Interacts (via VHS domain) with PIK4B; the interaction is important for PIK4B location at the Golgi apparatus membrane. Post-translationally, ubiquitinated.

Its subcellular location is the golgi apparatus. It localises to the trans-Golgi network membrane. The protein resides in the endosome membrane. It is found in the early endosome membrane. Functionally, plays a role in protein sorting and trafficking between the trans-Golgi network (TGN) and endosomes. Mediates the ARF-dependent recruitment of clathrin to the TGN and binds ubiquitinated proteins and membrane cargo molecules with a cytosolic acidic cluster-dileucine (DXXLL) motif. Mediates export of the GPCR receptor ADRA2B to the cell surface. Regulates retrograde transport of phosphorylated form of BACE1 from endosomes to the trans-Golgi network. In Mus musculus (Mouse), this protein is ADP-ribosylation factor-binding protein GGA2 (Gga2).